A 125-amino-acid chain; its full sequence is Small ribosomal subunit protein uS12 (125 aa).

Asp-89 bears the 3-methylthioaspartic acid mark.

This sequence belongs to the universal ribosomal protein uS12 family. In terms of assembly, part of the 30S ribosomal subunit. Contacts proteins S8 and S17. May interact with IF1 in the 30S initiation complex.

Its function is as follows. With S4 and S5 plays an important role in translational accuracy. In terms of biological role, interacts with and stabilizes bases of the 16S rRNA that are involved in tRNA selection in the A site and with the mRNA backbone. Located at the interface of the 30S and 50S subunits, it traverses the body of the 30S subunit contacting proteins on the other side and probably holding the rRNA structure together. The combined cluster of proteins S8, S12 and S17 appears to hold together the shoulder and platform of the 30S subunit. The sequence is that of Small ribosomal subunit protein uS12 from Bordetella petrii (strain ATCC BAA-461 / DSM 12804 / CCUG 43448).